We begin with the raw amino-acid sequence, 412 residues long: Divalent metal cation transporter MntH (412 aa).

11 helical membrane-spanning segments follow: residues 19-39 (LALM…GNFA), 46-66 (ASFG…AMLI), 94-114 (VWFY…AEFI), 122-142 (LILG…TFLI), 156-176 (VIGG…FFSQ), 196-216 (AVFL…IYLH), 241-261 (IAMT…AAAF), 290-310 (IFGL…TLAG), 322-342 (IPLW…ILMG), 348-368 (ILVM…VPLL), and 392-412 (AIVV…ALGL).

The protein belongs to the NRAMP family.

It localises to the cell inner membrane. In terms of biological role, h(+)-stimulated, divalent metal cation uptake system. The polypeptide is Divalent metal cation transporter MntH (Cronobacter sakazakii (strain ATCC BAA-894) (Enterobacter sakazakii)).